The primary structure comprises 287 residues: Large ribosomal subunit protein uL2 (287 aa).

Positions Arg221–Ser287 are disordered. Residues Lys258 to Ser287 are compositionally biased toward basic residues.

The protein belongs to the universal ribosomal protein uL2 family. Part of the 50S ribosomal subunit. Forms a bridge to the 30S subunit in the 70S ribosome.

One of the primary rRNA binding proteins. Required for association of the 30S and 50S subunits to form the 70S ribosome, for tRNA binding and peptide bond formation. It has been suggested to have peptidyltransferase activity; this is somewhat controversial. Makes several contacts with the 16S rRNA in the 70S ribosome. The polypeptide is Large ribosomal subunit protein uL2 (Prochlorococcus marinus (strain SARG / CCMP1375 / SS120)).